A 345-amino-acid chain; its full sequence is MTKKSTIQPCLVCGQSSNSILFGAPSCRACGEFFRRKVISNFKIKNNCLGECSFAKKSMKPCQSCRFQKCLEAGMLEKMVFSRKAIYSISNFEKSILEELEEAYSKLEHGRNETFNPKSDSNPKFCSHEELNNTCTIDIQIILDNLISYFQAKKPMGKEQDDVLKMHFIVPFVLFDTAFRAIGKSSYISPDGTMFGGSYVEKLYQDSSNSKIGVNNGKTSREIMESYWKVSYKILKSEMELLQLDRSEFLLLSALIYWDFGLENQSDKCCENCNTIREKVLKELVKYERKKSGQNALRIAMIMGLLQAVPKALDVMKTCGFLSKIYNLRGSGCPLYAISTNSPPQ.

The nuclear receptor DNA-binding region spans 7 to 82 (IQPCLVCGQS…AGMLEKMVFS (76 aa)). An NR C4-type zinc finger spans residues 10 to 30 (CLVCGQSSNSILFGAPSCRAC). The NR C4-type; degenerate zinc-finger motif lies at 46-65 (NNCLGECSFAKKSMKPCQSC). An NR LBD domain is found at 92–342 (FEKSILEELE…CPLYAISTNS (251 aa)). Residues 331–342 (SGCPLYAISTNS) form an AF-2 region.

The protein localises to the nucleus. Its function is as follows. Nuclear hormone receptor. Binds to xenobiotic ligand thiabendazole (TBZ), in vitro. Involved in the up-regulation of phase I detoxification genes, such as probable cytochrome P450 cyp-35d1, in response to TBZ. This is Nuclear hormone receptor family nhr-176 from Caenorhabditis elegans.